The primary structure comprises 201 residues: LexA repressor 1 (201 aa).

A DNA-binding region (H-T-H motif) is located at residues 27–47 (LAEIAQAFGFASRNAAQKHVQ). Catalysis depends on for autocatalytic cleavage activity residues S122 and K159.

The protein belongs to the peptidase S24 family. As to quaternary structure, homodimer.

It carries out the reaction Hydrolysis of Ala-|-Gly bond in repressor LexA.. In terms of biological role, represses a number of genes involved in the response to DNA damage (SOS response), including recA and lexA. In the presence of single-stranded DNA, RecA interacts with LexA causing an autocatalytic cleavage which disrupts the DNA-binding part of LexA, leading to derepression of the SOS regulon and eventually DNA repair. This chain is LexA repressor 1, found in Xanthomonas axonopodis pv. citri (strain 306).